A 236-amino-acid polypeptide reads, in one-letter code: 15,16-dihydrobiliverdin:ferredoxin oxidoreductase (236 aa).

Belongs to the HY2 family.

It carries out the reaction 15,16-dihydrobiliverdin + oxidized 2[4Fe-4S]-[ferredoxin] = biliverdin IXalpha + reduced 2[4Fe-4S]-[ferredoxin] + 2 H(+). Its function is as follows. Catalyzes the two-electron reduction of biliverdin IX-alpha at the C15 methine bridge. The sequence is that of 15,16-dihydrobiliverdin:ferredoxin oxidoreductase from Prochlorococcus marinus (strain MIT 9312).